A 364-amino-acid chain; its full sequence is Aminomethyltransferase (364 aa).

This sequence belongs to the GcvT family. In terms of assembly, the glycine cleavage system is composed of four proteins: P, T, L and H.

The catalysed reaction is N(6)-[(R)-S(8)-aminomethyldihydrolipoyl]-L-lysyl-[protein] + (6S)-5,6,7,8-tetrahydrofolate = N(6)-[(R)-dihydrolipoyl]-L-lysyl-[protein] + (6R)-5,10-methylene-5,6,7,8-tetrahydrofolate + NH4(+). In terms of biological role, the glycine cleavage system catalyzes the degradation of glycine. The protein is Aminomethyltransferase of Shewanella oneidensis (strain ATCC 700550 / JCM 31522 / CIP 106686 / LMG 19005 / NCIMB 14063 / MR-1).